We begin with the raw amino-acid sequence, 294 residues long: GTPase Era (294 aa).

In terms of domain architecture, Era-type G spans 3–170; it reads KSGFISIIGR…LELMIKYMPE (168 aa). Residues 11–18 form a G1 region; it reads GRPNVGKS. 11–18 contributes to the GTP binding site; the sequence is GRPNVGKS. The G2 stretch occupies residues 37-41; sequence QTTRN. The G3 stretch occupies residues 58 to 61; sequence DTPG. Residues 58-62 and 120-123 contribute to the GTP site; these read DTPGI and NKID. Residues 120 to 123 form a G4 region; the sequence is NKID. A G5 region spans residues 149–151; sequence ISA. The KH type-2 domain occupies 201 to 278; that stretch reads LSEEVPHGIA…NLKVWVKVKK (78 aa).

The protein belongs to the TRAFAC class TrmE-Era-EngA-EngB-Septin-like GTPase superfamily. Era GTPase family. Monomer.

The protein localises to the cytoplasm. It is found in the cell membrane. An essential GTPase that binds both GDP and GTP, with rapid nucleotide exchange. Plays a role in 16S rRNA processing and 30S ribosomal subunit biogenesis and possibly also in cell cycle regulation and energy metabolism. The sequence is that of GTPase Era from Clostridium novyi (strain NT).